We begin with the raw amino-acid sequence, 245 residues long: 5'-nucleotidase SurE (245 aa).

A divalent metal cation is bound by residues Asp-8, Asp-9, Ser-39, and Asn-91.

This sequence belongs to the SurE nucleotidase family. It depends on a divalent metal cation as a cofactor.

It localises to the cytoplasm. It catalyses the reaction a ribonucleoside 5'-phosphate + H2O = a ribonucleoside + phosphate. In terms of biological role, nucleotidase that shows phosphatase activity on nucleoside 5'-monophosphates. In Janthinobacterium sp. (strain Marseille) (Minibacterium massiliensis), this protein is 5'-nucleotidase SurE.